The chain runs to 875 residues: Phosphoenolpyruvate carboxylase (875 aa).

Catalysis depends on residues His137 and Lys542.

It belongs to the PEPCase type 1 family. Mg(2+) serves as cofactor.

The catalysed reaction is oxaloacetate + phosphate = phosphoenolpyruvate + hydrogencarbonate. Functionally, forms oxaloacetate, a four-carbon dicarboxylic acid source for the tricarboxylic acid cycle. This chain is Phosphoenolpyruvate carboxylase, found in Pseudomonas putida (strain ATCC 700007 / DSM 6899 / JCM 31910 / BCRC 17059 / LMG 24140 / F1).